A 969-amino-acid polypeptide reads, in one-letter code: RNA polymerase-associated protein RapA (969 aa).

A Helicase ATP-binding domain is found at 164–334 (EVGRRHAPRV…FARLRLLDPD (171 aa)). Position 177–184 (177–184 (DEVGLGKT)) interacts with ATP. A DEAH box motif is present at residues 280–283 (DEAH). One can recognise a Helicase C-terminal domain in the interval 492-646 (RVNWLLEKVK…TCPTGRAVYD (155 aa)).

Belongs to the SNF2/RAD54 helicase family. RapA subfamily. Interacts with the RNAP. Has a higher affinity for the core RNAP than for the holoenzyme. Its ATPase activity is stimulated by binding to RNAP.

Its function is as follows. Transcription regulator that activates transcription by stimulating RNA polymerase (RNAP) recycling in case of stress conditions such as supercoiled DNA or high salt concentrations. Probably acts by releasing the RNAP, when it is trapped or immobilized on tightly supercoiled DNA. Does not activate transcription on linear DNA. Probably not involved in DNA repair. The polypeptide is RNA polymerase-associated protein RapA (Vibrio campbellii (strain ATCC BAA-1116)).